A 309-amino-acid polypeptide reads, in one-letter code: Olfactory receptor 10V1 (309 aa).

Over 1-25 (MEGINKTAKMQFFFRPFSPDPEVQM) the chain is Extracellular. Residue asparagine 5 is glycosylated (N-linked (GlcNAc...) asparagine). The chain crosses the membrane as a helical span at residues 26–46 (LIFVVFLMMYLTSLGGNATIA). Residues 47-54 (VIVQINHS) lie on the Cytoplasmic side of the membrane. A helical membrane pass occupies residues 55-75 (LHTPMYFFLANLAVLEIFYTS). Over 76 to 100 (SITPLALANLLSMGKTPVSITGCGT) the chain is Extracellular. A disulfide bridge connects residues cysteine 98 and cysteine 190. Residues 101–121 (QMFFFVFLGGADCVLLVVMAY) traverse the membrane as a helical segment. At 122 to 140 (DQFIAICHPLRYRLIMSWS) the chain is on the cytoplasmic side. A helical transmembrane segment spans residues 141 to 161 (LCVELLVGSLVLGFLLSLPLT). Over 162-198 (ILIFHLPFCHNDEIYHFYCDMPAVMRLACADTRVHKT) the chain is Extracellular. A helical transmembrane segment spans residues 199–218 (ALYIISFIVLSIPLSLISIS). Topologically, residues 219–238 (YVFIVVAILRIRSAEGRQQA) are cytoplasmic. A helical membrane pass occupies residues 239–259 (YSTCSSHILVVLLQYGCTSFI). The Extracellular portion of the chain corresponds to 260 to 272 (YLSPSSSYSPEMG). Residues 273-293 (RVVSVAYTFITPILNPLIYSL) traverse the membrane as a helical segment. The Cytoplasmic portion of the chain corresponds to 294–309 (RNKELKDALRKALRKF).

Belongs to the G-protein coupled receptor 1 family.

It localises to the cell membrane. Its function is as follows. Odorant receptor. This is Olfactory receptor 10V1 (OR10V1) from Homo sapiens (Human).